The primary structure comprises 464 residues: MVYRPTAHEFDDLPKIEFIDSCPYQVFLEQYLKPCVPVLIGPKLTAQWKANTTWITSKGDPNILHSYILPDKPCTSRDNTSGNSLLNDNDIKNFIRSYAERIVNNEDKNVFLDSLLLSPNYEYLEENYGTIPVPLAYCNEKDRYGSQRRETVPLKSALHELRDEQVQLQCRQAPSNQALKSLYAKDMHLFRHLDPADFPYSTPDIFADDWLNAYVIDCESDDFRFAYLGSHLTTTGLHTDVYASHSFSVNLCGVKCWLFIDPKDLQTIASLYDDQQLPSWITKDDLFRGPLVNHRHLIKILFQYPGQTVFVPSGWYHQVLNIGTTLSINHNWCNASCILQMYTALKEQYEVSAESLKDLLEDGIVTKDRFSQVVTEVVEANYGWCWRRFWGMIKHQLKRRDAILHSSEYFSKWPIQPEFLPPLSWEYSILKNILLNDEPGSTFDSGSPPSSIVTIFKSLGDFKE.

Residues 182-349 (LYAKDMHLFR…QMYTALKEQY (168 aa)) enclose the JmjC domain.

The protein is JmjC domain-containing protein 1 (jmj1) of Schizosaccharomyces pombe (strain 972 / ATCC 24843) (Fission yeast).